The sequence spans 305 residues: 4-diphosphocytidyl-2-C-methyl-D-erythritol kinase (305 aa).

The active site involves K15. 99 to 109 is a binding site for ATP; sequence PMGGGIGGGSS. D141 is an active-site residue.

This sequence belongs to the GHMP kinase family. IspE subfamily.

It catalyses the reaction 4-CDP-2-C-methyl-D-erythritol + ATP = 4-CDP-2-C-methyl-D-erythritol 2-phosphate + ADP + H(+). Its pathway is isoprenoid biosynthesis; isopentenyl diphosphate biosynthesis via DXP pathway; isopentenyl diphosphate from 1-deoxy-D-xylulose 5-phosphate: step 3/6. In terms of biological role, catalyzes the phosphorylation of the position 2 hydroxy group of 4-diphosphocytidyl-2C-methyl-D-erythritol. In Marinomonas sp. (strain MWYL1), this protein is 4-diphosphocytidyl-2-C-methyl-D-erythritol kinase.